A 530-amino-acid polypeptide reads, in one-letter code: Equilibrative nucleoside transporter 4 (530 aa).

The disordered stretch occupies residues Met-1–Gly-21. Residues Met-1–His-68 are Extracellular-facing. Residues Ala-69 to Ile-89 traverse the membrane as a helical segment. Residues Thr-90–Gly-101 are Cytoplasmic-facing. A helical membrane pass occupies residues Thr-102 to Leu-122. Topologically, residues Asn-123–Gly-139 are extracellular. Residues Tyr-140–Phe-160 traverse the membrane as a helical segment. At Ser-161–Tyr-166 the chain is on the cytoplasmic side. The helical transmembrane segment at Ala-167 to Phe-187 threads the bilayer. The Extracellular segment spans residues Tyr-188–Thr-231. The helical transmembrane segment at Leu-232–Val-252 threads the bilayer. Residues Arg-253–Arg-351 lie on the Cytoplasmic side of the membrane. Residues Val-352–Pro-372 traverse the membrane as a helical segment. Over Gly-373 to Cys-381 the chain is Extracellular. The helical transmembrane segment at Ile-382–Gly-402 threads the bilayer. Topologically, residues Lys-403–His-416 are cytoplasmic. A helical membrane pass occupies residues Leu-417–Pro-437. Topologically, residues Ser-438–Cys-450 are extracellular. Residues Ile-451–Ala-471 traverse the membrane as a helical segment. At Ala-472 to Thr-486 the chain is on the cytoplasmic side. Residues Met-487–Thr-509 form a helical membrane-spanning segment. Residues Arg-510 to Leu-530 are Extracellular-facing. A glycan (N-linked (GlcNAc...) asparagine) is linked at Asn-523.

The protein belongs to the SLC29A/ENT transporter (TC 2.A.57) family. Post-translationally, N-glycosylated. In terms of tissue distribution, mainly expressed in brain and skeletal muscle. In brain, expressed in cerebellum, cerebral cortex, medulla oblongata, occipital pole, frontal and temporal lobes putamen, spinal cord, substancia nigra, hippocampus, caudate nucleus, nucleus accumbens, pons and choroid plexus. Expressed in heart, in both cardiomyocytes and vascular endothelial cells. Also expressed in adrenal gland, small intestine, pancreas, kidney, liver, bone marrow, lymph node. Located in endometrial stroma, where the expression is high in the proliferative phase, decreases during the secretory phase, and is no longer detectable in the menstrual phase.

The protein resides in the cell membrane. The protein localises to the apical cell membrane. It catalyses the reaction serotonin(out) = serotonin(in). The enzyme catalyses dopamine(out) = dopamine(in). The catalysed reaction is (R)-noradrenaline(out) = (R)-noradrenaline(in). It carries out the reaction (R)-adrenaline(out) = (R)-adrenaline(in). It catalyses the reaction histamine(out) = histamine(in). The enzyme catalyses tyramine(in) = tyramine(out). The catalysed reaction is guanidine(out) = guanidine(in). It carries out the reaction adenosine(in) = adenosine(out). Activated at acidic pH. Electrogenic voltage-dependent transporter that mediates the transport of a variety of endogenous bioactive amines, cationic xenobiotics and drugs. Utilizes the physiologic inside-negative membrane potential as a driving force to facilitate cellular uptake of organic cations. Functions as a Na(+)- and Cl(-)-independent bidirectional transporter. Substrate transport is pH-dependent and enhanced under acidic condition, which is most likely the result of allosteric changes in the transporter structure. Implicated in monoamine neurotransmitters uptake such as serotonin, dopamine, adrenaline/epinephrine, noradrenaline/norepinephrine, histamine and tyramine, thereby supporting a role in homeostatic regulation of aminergic neurotransmission in the central nervous system. Also responsible for the uptake of bioactive amines and drugs through the blood-cerebrospinal fluid (CSF) barrier, from the CSF into choroid plexus epithelial cells, thereby playing a significant role in the clearance of cationic neurotoxins, xenobiotics and metabolic waste in the brain. Involved in bidirectional transport of the purine nucleoside adenosine and plays a role in the regulation of extracellular adenosine concentrations in cardiac tissues, in particular during ischemia. May be involved in organic cation uptake from the tubular lumen into renal tubular cells, thereby contributing to organic cation reabsorption in the kidney. Also transports guanidine. The protein is Equilibrative nucleoside transporter 4 of Homo sapiens (Human).